Reading from the N-terminus, the 336-residue chain is Dihydroorotate dehydrogenase (quinone) (336 aa).

FMN is bound by residues 62–66 (AGLDK) and T86. K66 contributes to the substrate binding site. 111–115 (NRMGF) is a binding site for substrate. The FMN site is built by N139 and N172. N172 lines the substrate pocket. S175 acts as the Nucleophile in catalysis. N177 contributes to the substrate binding site. K217 and T245 together coordinate FMN. Position 246-247 (246-247 (NT)) interacts with substrate. FMN-binding positions include G268, G297, and 318–319 (YS).

Belongs to the dihydroorotate dehydrogenase family. Type 2 subfamily. In terms of assembly, monomer. FMN serves as cofactor.

It localises to the cell membrane. The catalysed reaction is (S)-dihydroorotate + a quinone = orotate + a quinol. It participates in pyrimidine metabolism; UMP biosynthesis via de novo pathway; orotate from (S)-dihydroorotate (quinone route): step 1/1. In terms of biological role, catalyzes the conversion of dihydroorotate to orotate with quinone as electron acceptor. This chain is Dihydroorotate dehydrogenase (quinone), found in Salmonella choleraesuis (strain SC-B67).